Consider the following 194-residue polypeptide: Small ribosomal subunit protein eS7 (194 aa).

This sequence belongs to the eukaryotic ribosomal protein eS7 family.

The chain is Small ribosomal subunit protein eS7 (RpS7) from Drosophila yakuba (Fruit fly).